We begin with the raw amino-acid sequence, 864 residues long: Putative Gly-rich membrane protein Bcell_0380 (864 aa).

The helical transmembrane segment at 7–27 (ITFLAAFICIIFVIYAIYHSV) threads the bilayer. A disordered region spans residues 372–399 (TVENSFYDEDTTGQSDTGKGTPMSTADM). Residues 383 to 395 (TGQSDTGKGTPMS) show a composition bias toward polar residues.

The protein localises to the cell membrane. The sequence is that of Putative Gly-rich membrane protein Bcell_0380 from Evansella cellulosilytica (strain ATCC 21833 / DSM 2522 / FERM P-1141 / JCM 9156 / N-4) (Bacillus cellulosilyticus).